Consider the following 879-residue polypeptide: Alanine--tRNA ligase (879 aa).

His567, His571, Cys669, and His673 together coordinate Zn(2+).

It belongs to the class-II aminoacyl-tRNA synthetase family. Zn(2+) is required as a cofactor.

It localises to the cytoplasm. It catalyses the reaction tRNA(Ala) + L-alanine + ATP = L-alanyl-tRNA(Ala) + AMP + diphosphate. Its function is as follows. Catalyzes the attachment of alanine to tRNA(Ala) in a two-step reaction: alanine is first activated by ATP to form Ala-AMP and then transferred to the acceptor end of tRNA(Ala). Also edits incorrectly charged Ser-tRNA(Ala) and Gly-tRNA(Ala) via its editing domain. The chain is Alanine--tRNA ligase from Levilactobacillus brevis (strain ATCC 367 / BCRC 12310 / CIP 105137 / JCM 1170 / LMG 11437 / NCIMB 947 / NCTC 947) (Lactobacillus brevis).